A 661-amino-acid polypeptide reads, in one-letter code: COBRA-like protein 7 (661 aa).

Residues 1–26 form the signal peptide; that stretch reads MDSAPNFIPRLLLLSLLIVSIPLTSS. A disordered region spans residues 26 to 45; sequence SQSDANTTNPSPSPPSDSDL. 14 N-linked (GlcNAc...) asparagine glycosylation sites follow: N31, N64, N122, N170, N314, N327, N356, N369, N398, N410, N430, N472, N551, and N561. A lipid anchor (GPI-anchor amidated serine) is attached at S637. Residues 638–661 constitute a propeptide, removed in mature form; the sequence is SQHRKHISVFLLALPVLALLILRA.

It belongs to the COBRA family. As to expression, expressed in roots, stems, leaves, flowers and siliques.

It localises to the cell membrane. In Arabidopsis thaliana (Mouse-ear cress), this protein is COBRA-like protein 7 (COBL7).